The primary structure comprises 520 residues: Peptide chain release factor 3 (520 aa).

The region spanning glutamate 8–threonine 277 is the tr-type G domain. GTP contacts are provided by residues serine 17 to threonine 24, aspartate 85 to histidine 89, and asparagine 139 to aspartate 142.

This sequence belongs to the TRAFAC class translation factor GTPase superfamily. Classic translation factor GTPase family. PrfC subfamily.

The protein localises to the cytoplasm. Functionally, increases the formation of ribosomal termination complexes and stimulates activities of RF-1 and RF-2. It binds guanine nucleotides and has strong preference for UGA stop codons. It may interact directly with the ribosome. The stimulation of RF-1 and RF-2 is significantly reduced by GTP and GDP, but not by GMP. In Staphylococcus epidermidis (strain ATCC 35984 / DSM 28319 / BCRC 17069 / CCUG 31568 / BM 3577 / RP62A), this protein is Peptide chain release factor 3.